Reading from the N-terminus, the 244-residue chain is Phosphoadenosine 5'-phosphosulfate reductase (244 aa).

Cysteine 239 serves as the catalytic Nucleophile; cysteine thiosulfonate intermediate.

Belongs to the PAPS reductase family. CysH subfamily.

The protein localises to the cytoplasm. The catalysed reaction is [thioredoxin]-disulfide + sulfite + adenosine 3',5'-bisphosphate + 2 H(+) = [thioredoxin]-dithiol + 3'-phosphoadenylyl sulfate. It participates in sulfur metabolism; hydrogen sulfide biosynthesis; sulfite from sulfate: step 3/3. Its function is as follows. Catalyzes the formation of sulfite from phosphoadenosine 5'-phosphosulfate (PAPS) using thioredoxin as an electron donor. This is Phosphoadenosine 5'-phosphosulfate reductase from Photorhabdus laumondii subsp. laumondii (strain DSM 15139 / CIP 105565 / TT01) (Photorhabdus luminescens subsp. laumondii).